The primary structure comprises 660 residues: MKTVVFAYHDMGCLGIEALLAAGYEISAIFTHTDNPGEKAFYGSVAHLAAERDIPVYAPDNVNHPLWVERIAQLSPEVIFSFYYRHLICDEIFQLAPAGAFNLHGSLLPKYRGRAPLNWVLVNGETETGVTLHRMVKRADAGAIVAQLRVAIAPDDIAITLHHKLCHAARQLLEQTLPAIKHGNILEIAQRENEATCFGRRTPDDSFLEWHKPASVLHNMVRAVADPWPGAFSYVGNQKFTVWSSRVHPHASKAQPGSVISVAPLLIACGDGALEIVTGQAGDGITMQGSQLAQMLGLVQGSRLNSQPACTARRRTRVLILGVNGFIGNHLTERLLREDHYEVYGLDIGSDAISRFLNHPHFHFVEGDISIHSEWIEYHVKKCDVVLPLVAIATPIEYTRNPLRVFELDFEENLRIIRYCVKYRKRIIFPSTSEVYGMCSDKYFDEDHSNLIVGPVNKPRWIYSVSKQLLDRVIWAYGEKEGLQFTLFLPFNWMGPRLDNLNAARIGSSRAITQLILNLVEGSPIKLIDGGKQKRCFTDIRDGIEALYRIIENAGNRCDGEIINIGNPENEASIEELGEMLLASFEKHPLRHHFPPFAGFRVVESSCYYGKGYQDVEHRKPSIRNAHRCLDWEPKIDMQETIDETLDFFLRTVDLTDKPS.

A formyltransferase ArnAFT region spans residues 1-304; the sequence is MKTVVFAYHD…MLGLVQGSRL (304 aa). 86 to 88 lines the (6R)-10-formyltetrahydrofolate pocket; it reads HLI. H104 acts as the Proton donor; for formyltransferase activity in catalysis. (6R)-10-formyltetrahydrofolate is bound by residues R114 and 136–140; that span reads VKRAD. The segment at 314–660 is dehydrogenase ArnADH; sequence RRTRVLILGV…RTVDLTDKPS (347 aa). NAD(+)-binding positions include D347 and 368-369; that span reads DI. UDP-alpha-D-glucuronate is bound by residues A393, Y398, and 432–433; that span reads TS. The Proton acceptor; for decarboxylase activity role is filled by E434. UDP-alpha-D-glucuronate contacts are provided by residues R460, N492, 526-535, and Y613; that span reads KLIDGGKQKR. The Proton donor; for decarboxylase activity role is filled by R619.

The protein in the N-terminal section; belongs to the Fmt family. UDP-L-Ara4N formyltransferase subfamily. This sequence in the C-terminal section; belongs to the NAD(P)-dependent epimerase/dehydratase family. UDP-glucuronic acid decarboxylase subfamily. As to quaternary structure, homohexamer, formed by a dimer of trimers.

It carries out the reaction UDP-alpha-D-glucuronate + NAD(+) = UDP-beta-L-threo-pentopyranos-4-ulose + CO2 + NADH. The enzyme catalyses UDP-4-amino-4-deoxy-beta-L-arabinose + (6R)-10-formyltetrahydrofolate = UDP-4-deoxy-4-formamido-beta-L-arabinose + (6S)-5,6,7,8-tetrahydrofolate + H(+). Its pathway is nucleotide-sugar biosynthesis; UDP-4-deoxy-4-formamido-beta-L-arabinose biosynthesis; UDP-4-deoxy-4-formamido-beta-L-arabinose from UDP-alpha-D-glucuronate: step 1/3. It participates in nucleotide-sugar biosynthesis; UDP-4-deoxy-4-formamido-beta-L-arabinose biosynthesis; UDP-4-deoxy-4-formamido-beta-L-arabinose from UDP-alpha-D-glucuronate: step 3/3. The protein operates within bacterial outer membrane biogenesis; lipopolysaccharide biosynthesis. Functionally, bifunctional enzyme that catalyzes the oxidative decarboxylation of UDP-glucuronic acid (UDP-GlcUA) to UDP-4-keto-arabinose (UDP-Ara4O) and the addition of a formyl group to UDP-4-amino-4-deoxy-L-arabinose (UDP-L-Ara4N) to form UDP-L-4-formamido-arabinose (UDP-L-Ara4FN). The modified arabinose is attached to lipid A and is required for resistance to polymyxin and cationic antimicrobial peptides. The polypeptide is Bifunctional polymyxin resistance protein ArnA (Shigella flexneri serotype 5b (strain 8401)).